The sequence spans 26 residues: Coenzyme PQQ synthesis protein A (26 aa).

A cross-link (pyrroloquinoline quinone (Glu-Tyr)) is located at residues 16–20 (EINMY).

This sequence belongs to the PqqA family.

Its pathway is cofactor biosynthesis; pyrroloquinoline quinone biosynthesis. In terms of biological role, required for coenzyme pyrroloquinoline quinone (PQQ) biosynthesis. PQQ is probably formed by cross-linking a specific glutamate to a specific tyrosine residue and excising these residues from the peptide. The protein is Coenzyme PQQ synthesis protein A of Cereibacter sphaeroides (strain ATCC 17029 / ATH 2.4.9) (Rhodobacter sphaeroides).